The following is a 273-amino-acid chain: 2,3,4,5-tetrahydropyridine-2,6-dicarboxylate N-succinyltransferase (273 aa).

2 residues coordinate substrate: R106 and D143.

This sequence belongs to the transferase hexapeptide repeat family. As to quaternary structure, homotrimer.

The protein resides in the cytoplasm. The enzyme catalyses (S)-2,3,4,5-tetrahydrodipicolinate + succinyl-CoA + H2O = (S)-2-succinylamino-6-oxoheptanedioate + CoA. It functions in the pathway amino-acid biosynthesis; L-lysine biosynthesis via DAP pathway; LL-2,6-diaminopimelate from (S)-tetrahydrodipicolinate (succinylase route): step 1/3. The polypeptide is 2,3,4,5-tetrahydropyridine-2,6-dicarboxylate N-succinyltransferase (Wolbachia pipientis wMel).